The chain runs to 100 residues: NADH-quinone oxidoreductase subunit K (100 aa).

A run of 3 helical transmembrane segments spans residues 1–21, 28–48, and 64–84; these read MIGL…GLAG, ILLL…GFVA, and FIIA…ILWF.

The protein belongs to the complex I subunit 4L family. In terms of assembly, NDH-1 is composed of 14 different subunits. Subunits NuoA, H, J, K, L, M, N constitute the membrane sector of the complex.

It localises to the cell inner membrane. It catalyses the reaction a quinone + NADH + 5 H(+)(in) = a quinol + NAD(+) + 4 H(+)(out). NDH-1 shuttles electrons from NADH, via FMN and iron-sulfur (Fe-S) centers, to quinones in the respiratory chain. The immediate electron acceptor for the enzyme in this species is believed to be ubiquinone. Couples the redox reaction to proton translocation (for every two electrons transferred, four hydrogen ions are translocated across the cytoplasmic membrane), and thus conserves the redox energy in a proton gradient. The chain is NADH-quinone oxidoreductase subunit K from Helicobacter pylori (strain Shi470).